The chain runs to 333 residues: Cinnamoyl-CoA reductase 1 (333 aa).

Residues 13-19, R38, K44, 64-65, 84-86, Y157, K161, 184-187, and S199 contribute to the NADP(+) site; these read GAGGFIA, DL, TAS, and PVLV. Residues C150 and C158 are joined by a disulfide bond. K161 serves as the catalytic Proton donor.

It belongs to the NAD(P)-dependent epimerase/dehydratase family. Dihydroflavonol-4-reductase subfamily. The formation of a reversible disulfide bond reduces activity by perturbing the positioning of nearby catalytic residues. As to expression, expressed in flowers, leaves and stems.

The protein resides in the cytoplasm. The enzyme catalyses (E)-coniferaldehyde + NADP(+) + CoA = (E)-feruloyl-CoA + NADPH + H(+). It catalyses the reaction (E)-4-coumaraldehyde + NADP(+) + CoA = (E)-4-coumaroyl-CoA + NADPH + H(+). It carries out the reaction (E)-sinapaldehyde + NADP(+) + CoA = (E)-sinapoyl-CoA + NADPH + H(+). The catalysed reaction is (E)-cinnamaldehyde + NADP(+) + CoA = (E)-cinnamoyl-CoA + NADPH + H(+). It participates in aromatic compound metabolism; phenylpropanoid biosynthesis. Its activity is regulated as follows. Inhibited by sodium iodide-mediated oxidation. Functionally, involved in the latter stages of lignin biosynthesis. Catalyzes one of the last steps of monolignol biosynthesis, the conversion of cinnamoyl-CoAs into their corresponding cinnamaldehydes. Mediates the conversion of feruloyl CoA to coniferylaldehyde. Also active toward p-coumaroyl-CoA and sinapoyl-CoA. Involved in the production of floral volatile phenylpropanoids in flowers of fragrant cultivars (e.g. cv. Mitchell and cv. V26) from cinnamic acid, a common precursor with the anthocyanin biosynthesis pathway involved in flower pigmentation. The polypeptide is Cinnamoyl-CoA reductase 1 (Petunia hybrida (Petunia)).